Reading from the N-terminus, the 702-residue chain is Elongation factor G (702 aa).

The tr-type G domain maps to 8–196 (ERYRNIGISA…MKAIIWDEAS (189 aa)). Residues 17–24 (AHIDAGKT), 88–92 (DTPGH), and 142–145 (NKMD) each bind GTP.

Belongs to the TRAFAC class translation factor GTPase superfamily. Classic translation factor GTPase family. EF-G/EF-2 subfamily.

It localises to the cytoplasm. Its function is as follows. Catalyzes the GTP-dependent ribosomal translocation step during translation elongation. During this step, the ribosome changes from the pre-translocational (PRE) to the post-translocational (POST) state as the newly formed A-site-bound peptidyl-tRNA and P-site-bound deacylated tRNA move to the P and E sites, respectively. Catalyzes the coordinated movement of the two tRNA molecules, the mRNA and conformational changes in the ribosome. In Thiomonas delicata (Thiomonas cuprina), this protein is Elongation factor G (fusA).